The primary structure comprises 232 residues: Flagellar L-ring protein (232 aa).

The N-terminal stretch at 1 to 15 is a signal peptide; sequence MKKVLFYVLPFAFFG. A lipid anchor (N-palmitoyl cysteine) is attached at cysteine 16. Cysteine 16 carries S-diacylglycerol cysteine lipidation.

The protein belongs to the FlgH family. The basal body constitutes a major portion of the flagellar organelle and consists of four rings (L,P,S, and M) mounted on a central rod.

The protein resides in the cell outer membrane. It is found in the bacterial flagellum basal body. Assembles around the rod to form the L-ring and probably protects the motor/basal body from shearing forces during rotation. In Campylobacter jejuni subsp. doylei (strain ATCC BAA-1458 / RM4099 / 269.97), this protein is Flagellar L-ring protein.